The sequence spans 646 residues: Anoctamin-10 (646 aa).

The next 8 membrane-spanning stretches (helical) occupy residues 210 to 230 (LYFG…LIGI), 241 to 261 (DKYV…LEVW), 314 to 334 (IYLV…YVMM), 357 to 377 (VLLF…NLLY), 404 to 424 (VLVF…FVMQ), 502 to 522 (FLLF…AVLV), 557 to 577 (LAFE…IALS), and 592 to 612 (ILTV…LAFV).

It belongs to the anoctamin family.

The protein localises to the membrane. Does not exhibit calcium-activated chloride channel (CaCC) activity. Can inhibit the activity of ANO1. The sequence is that of Anoctamin-10 (ano10) from Danio rerio (Zebrafish).